Here is a 394-residue protein sequence, read N- to C-terminus: Elongation factor Tu (394 aa).

A tr-type G domain is found at 10 to 204; the sequence is KPHVNIGTIG…AVDSYIPQPV (195 aa). A G1 region spans residues 19 to 26; it reads GHVDHGKT. A GTP-binding site is contributed by 19-26; that stretch reads GHVDHGKT. Residue Thr-26 coordinates Mg(2+). Residues 60–64 are G2; that stretch reads GITIS. The interval 81–84 is G3; sequence DCPG. Residues 81 to 85 and 136 to 139 contribute to the GTP site; these read DCPGH and NKID. The interval 136–139 is G4; that stretch reads NKID. The segment at 174 to 176 is G5; the sequence is SAL.

Belongs to the TRAFAC class translation factor GTPase superfamily. Classic translation factor GTPase family. EF-Tu/EF-1A subfamily. In terms of assembly, monomer.

The protein resides in the cytoplasm. It carries out the reaction GTP + H2O = GDP + phosphate + H(+). In terms of biological role, GTP hydrolase that promotes the GTP-dependent binding of aminoacyl-tRNA to the A-site of ribosomes during protein biosynthesis. This Rickettsia conorii (strain ATCC VR-613 / Malish 7) protein is Elongation factor Tu.